The chain runs to 448 residues: TRAF family member-associated NF-kappa-B activator (448 aa).

Positions 35-65 (MDKNIGEQLNRAYEAFRQACMDRDSAVRELQ) are necessary for interaction with ZC3H12A. Residues 60-98 (AVRELQQKQTENYEQRIREQQEQLSFQQNLIDRLKSQLL) are a coiled coil. The segment at 105–224 (DNSYGYVPLL…QCTDKTEKQE (120 aa)) is necessary for interaction with TRAF6. The segment at 166-205 (HERDNIEKTFWDLKEEFHRICLLAKAQKDHLSKLNIPDIA) is interaction with TBK1 and IKBKE. The segment at 205–224 (ATDTQCSVPIQCTDKTEKQE) is TRAF family member interaction. The residue at position 211 (S211) is a Phosphoserine. T246 carries the phosphothreonine modification. Phosphoserine is present on residues S258, S261, S377, and S380. The UBZ1-type zinc finger occupies 416 to 443 (PLVCEFCQELFPPSITSRGDFLRHLNTH). 4 residues coordinate Zn(2+): C419, C422, H439, and H443.

Homodimer. Found in a deubiquitination complex with TANK, USP10 and ZC3H12A; this complex inhibits genotoxic stress- or interleukin-1-beta-mediated NF-kappaB activation by promoting IKBKG or TRAF6 deubiquitination. Interacts with IKBKG; this interaction increases in response to DNA damage. Interacts with TRAF6; this interaction increases in response to DNA damage and recruits USP10 to the ubiquitinated TRAF6. Interacts with USP10; this interaction increases in response to DNA damage. Interacts with TBK1 and IKBKE. Also interacts with TRAF1, TRAF2, and TRAF3 by binding to their TRAF-C domains; the interaction with TRAF2 is disrupted by the phosphorylation of TANK by IKBKE. Interacts more strongly with TRAF1 and TRAF2 than TRAF3. Part of a ternary complex consisting of TANK, IKBKB and IKBKG. Interacts with IKBKG; the interaction is enhanced by IKBKE and TBK1. Heart, brain, spleen, lung, liver, skeletal muscle, kidney and testis.

It localises to the cytoplasm. Functionally, adapter protein involved in I-kappa-B-kinase (IKK) regulation which constitutively binds TBK1 and IKBKE playing a role in antiviral innate immunity. Acts as a regulator of TRAF function by maintaining them in a latent state. Blocks TRAF2 binding to LMP1 and inhibits LMP1-mediated NF-kappa-B activation. Negatively regulates NF-kappaB signaling and cell survival upon DNA damage. Plays a role as an adapter to assemble ZC3H12A, USP10 in a deubiquitination complex which plays a negative feedback response to attenuate NF-kappaB activation through the deubiquitination of IKBKG or TRAF6 in response to interleukin-1-beta (IL1B) stimulation or upon DNA damage. Promotes UBP10-induced deubiquitination of TRAF6 in response to DNA damage. May control negatively TRAF2-mediated NF-kappa-B activation signaled by CD40, TNFR1 and TNFR2. Essential for the efficient induction of IRF-dependent transcription following infection with Sendai virus. The sequence is that of TRAF family member-associated NF-kappa-B activator (Tank) from Mus musculus (Mouse).